The primary structure comprises 767 residues: Pre-mRNA-splicing factor ATP-dependent RNA helicase PRP43 (767 aa).

A disordered region spans residues 1–74 (MGSKRRFSSE…KLEDGKINPF (74 aa)). Ser-8 and Ser-9 each carry phosphoserine. The span at 58 to 70 (TSAEEAQKLEDGK) shows a compositional bias: basic and acidic residues. Residues 103–268 (LKLYQNNQIM…FNDAPLLAVP (166 aa)) enclose the Helicase ATP-binding domain. ATP is bound at residue 116–123 (GETGSGKT). The DEAH box signature appears at 215–218 (DEAH). The region spanning 293-473 (TVLQIHATEE…STVLELKKLG (181 aa)) is the Helicase C-terminal domain.

Belongs to the DEAD box helicase family. DEAH subfamily. DDX15/PRP43 sub-subfamily. As to quaternary structure, component of the NTR complex (NTC-related complex), composed of NTR1, NTR2 and PRP43. Interacts with NTR1 and NTR2. Interacts with SPP382.

Its subcellular location is the nucleus. The catalysed reaction is ATP + H2O = ADP + phosphate + H(+). Functionally, pre-mRNA processing factor involved in disassembly of spliceosomes after the release of mature mRNA. In Saccharomyces cerevisiae (strain ATCC 204508 / S288c) (Baker's yeast), this protein is Pre-mRNA-splicing factor ATP-dependent RNA helicase PRP43 (PRP43).